A 765-amino-acid chain; its full sequence is MKWSILLLVGCAAAIDVPRQPYAPTGSGKKRLTFNETVVKRAISPSAISVEWISTSEDGDYVYQDQDGSLKIQSIVTNHTQTLVPADKVPEDAYSYWIHPNLSSVLWATNYTKQYRYSYFADYFIQDVQSMKLRPLAPDQSGDIQYAQWSPTGDAIAFVRDNNVFVWTNASTSQITNDGGPDLFNGVPDWIYEEEILGDRFALWFSPDGAYLAFLRFNETGVPTFTVPYYMDNEEIAPPYPRELELRYPKVSQTNPTVELNLLELRTGERTPVPIDAFDAKELIIGEVAWLTGKHDVVAVKAFNRVQDRQKVVAVDVASLRSKTISERDGTDGWLDNLLSMAYIGPIGESKEEYYIDISDQSGWAHLWLFPVAGGEPIALTKGEWEVTNILSIDKPRQLVYFLSTKHHSTERHLYSVSWKTKEITPLVDDTVPAVWSASFSSQGGYYILSYRGPDVPYQDLYAINSTAPLRTITSNAAVLNALKEYTLPNITYFELALPSGETLNVMQRLPVKFSPKKKYPVLFTPYGGPGAQEVSKAWQALDFKAYIASDPELEYITWTVDNRGTGYKGRAFRCQVASRLGELEAADQVFAAQQAAKLPYVDAQHIAIWGWSYGGYLTGKVIETDSGAFSLGVQTAPVSDWRFYDSMYTERYMKTLESNAAGYNASAIRKVAGYKNVRGGVLIQHGTGDDNVHFQNAAALVDTLVGAGVTPEKLQVQWFTDSDHGIRYHGGNVFLYRQLSKRLYEEKKRKEKGEAHQWSKKSVL.

Positions 1–14 (MKWSILLLVGCAAA) are cleaved as a signal peptide. 8 N-linked (GlcNAc...) asparagine glycosylation sites follow: Asn35, Asn78, Asn101, Asn110, Asn169, Asn218, Asn465, and Asn490. Ser613 (charge relay system) is an active-site residue. N-linked (GlcNAc...) asparagine glycosylation occurs at Asn665. Residues Asp690 and His725 each act as charge relay system in the active site.

This sequence belongs to the peptidase S9B family.

It is found in the secreted. It catalyses the reaction Release of an N-terminal dipeptide, Xaa-Yaa-|-Zaa-, from a polypeptide, preferentially when Yaa is Pro, provided Zaa is neither Pro nor hydroxyproline.. Functionally, extracellular dipeptidyl-peptidase which removes N-terminal dipeptides sequentially from polypeptides having unsubstituted N-termini provided that the penultimate residue is proline. Contributes to pathogenicity. In Aspergillus fumigatus (strain CBS 144.89 / FGSC A1163 / CEA10) (Neosartorya fumigata), this protein is Probable dipeptidyl peptidase 4 (dpp4).